A 315-amino-acid polypeptide reads, in one-letter code: uncharacterized protein (315 aa).

Residues 296–308 show a composition bias toward basic residues; it reads RSKLRKGTHKRTP. Residues 296 to 315 are disordered; it reads RSKLRKGTHKRTPGRAGDAD.

The protein belongs to the metallo-dependent hydrolases superfamily. Peptidase M19 family.

This is an uncharacterized protein from Acinetobacter calcoaceticus.